The chain runs to 292 residues: Syntenin-2 (292 aa).

PDZ domains are found at residues 108-187 (EIHL…IRDR) and 192-267 (TVTM…IPTV).

As to quaternary structure, monomer and homodimer. Interacts with SDCBP. Interacts with TM4SF1.

The protein resides in the cytoplasm. The protein localises to the nucleus. It localises to the nucleolus. It is found in the nucleoplasm. Its subcellular location is the cell membrane. The protein resides in the nucleus speckle. In terms of biological role, binds phosphatidylinositol 4,5-bisphosphate (PIP2). May play a role in the organization of nuclear PIP2, cell division and cell survival. This Mus musculus (Mouse) protein is Syntenin-2 (Sdcbp2).